A 529-amino-acid polypeptide reads, in one-letter code: Glycerol kinase 5 (529 aa).

Positions 28 and 29 each coordinate ATP. Glycerol is bound by residues R98, D275, and Q276. ATP is bound by residues T297, G340, and G440.

It belongs to the FGGY kinase family.

The protein localises to the cytoplasm. It catalyses the reaction glycerol + ATP = sn-glycerol 3-phosphate + ADP + H(+). The protein operates within polyol metabolism; glycerol degradation via glycerol kinase pathway; sn-glycerol 3-phosphate from glycerol: step 1/1. Its function is as follows. Skin-specific kinase that plays a key role in glycerol metabolism, catalyzing its phosphorylation to produce sn-glycerol 3-phosphate. Involved in skin-specific regulation of sterol regulatory element-binding protein (SREBP) processing and lipid biosynthesis. This is Glycerol kinase 5 from Homo sapiens (Human).